The following is a 691-amino-acid chain: Elongation factor G (691 aa).

Residues 8 to 283 (EKQRNIGIMA…AVVQYLPSPL (276 aa)) enclose the tr-type G domain. Residues 17-24 (AHIDAGKT), 81-85 (DTPGH), and 135-138 (NKMD) contribute to the GTP site.

The protein belongs to the TRAFAC class translation factor GTPase superfamily. Classic translation factor GTPase family. EF-G/EF-2 subfamily.

It localises to the cytoplasm. Functionally, catalyzes the GTP-dependent ribosomal translocation step during translation elongation. During this step, the ribosome changes from the pre-translocational (PRE) to the post-translocational (POST) state as the newly formed A-site-bound peptidyl-tRNA and P-site-bound deacylated tRNA move to the P and E sites, respectively. Catalyzes the coordinated movement of the two tRNA molecules, the mRNA and conformational changes in the ribosome. The chain is Elongation factor G from Lawsonia intracellularis (strain PHE/MN1-00).